A 104-amino-acid polypeptide reads, in one-letter code: Protamine-2 (104 aa).

A disordered region spans residues 1 to 91 (MVRYRMRSPS…RRGCRRSRRR (91 aa)). Serine 8, serine 10, and serine 33 each carry phosphoserine. Residues 33 to 44 (SPERVEDYGRTE) show a composition bias toward basic and acidic residues. A compositionally biased stretch (basic residues) spans 45 to 91 (RGHHHRHRRCKRLHRIHKRRRSCRRRRRHSCRHRRRHRRGCRRSRRR).

The protein belongs to the protamine P2 family. In terms of assembly, interacts with TDRP. Proteolytic processing into mature chains is required for histone eviction during spermatogenesis. Transition proteins (TNP1 and TNP2) are required for processing. Testis.

Its subcellular location is the nucleus. It localises to the chromosome. Its function is as follows. Protamines substitute for histones in the chromatin of sperm during the haploid phase of spermatogenesis. They compact sperm DNA into a highly condensed, stable and inactive complex. The chain is Protamine-2 (Prm2) from Rattus norvegicus (Rat).